The following is a 279-amino-acid chain: Type II iodothyronine deiodinase (279 aa).

The Lumenal segment spans residues 1-7 (MGLLSAD). A helical; Signal-anchor for type III membrane protein membrane pass occupies residues 8 to 28 (LLITLQILPVFFSNCLFLALY). Over 29–279 (DSVILLKHMV…TEDLSTDVSL (251 aa)) the chain is Cytoplasmic. The active site involves Sec-132. Non-standard amino acids (selenocysteine) are located at Sec-132 and Sec-265.

Belongs to the iodothyronine deiodinase family. In terms of assembly, predominantly monomer. Can form homodimers but homodimerization is not essential for enzyme activity. Highly expressed in liver and in various parts of the brain including telencephalon, hippocampus, cerebellum, and brain stem, and weakly expressed in thyroid, lung, and small intestine. Not detected in skeletal muscle, heart atria or ventricle, gizzard or kidney.

It is found in the endoplasmic reticulum membrane. It carries out the reaction 3,3',5-triiodo-L-thyronine + iodide + A + H(+) = L-thyroxine + AH2. The catalysed reaction is 3,3'-diiodo-L-thyronine + iodide + A + H(+) = 3,3',5'-triiodo-L-thyronine + AH2. It catalyses the reaction 3'-iodo-L-thyronine + iodide + A + H(+) = 3',5'-diiodo-L-thyronine + AH2. The enzyme catalyses 3,3'-diiodothyronamine + iodide + A + H(+) = 3,3',5'-triiodothyronamine + AH2. It carries out the reaction 3'-iodothyronamine + iodide + A + H(+) = 3',5'-diiodothyronamine + AH2. Its activity is regulated as follows. Not inhibited by N(6)-propylthiouracil. Plays a crucial role in the metabolism of thyroid hormones (TH) and has specific roles in TH activation and inactivation by deiodination. Catalyzes the deiodination of L-thyroxine (T4) to 3,5,3'-triiodothyronine (T3) and 3,3',5'-triiodothyronine (rT3) to 3,3'-diiodothyronine (3,3'-T2) via outer-ring deiodination (ORD). Catalyzes the deiodination of 3',5'-diiodothyronine (3',5'-T2) to 3'-monoiodothyronine (3'-T1) via ORD. Catalyzes the phenolic ring deiodinations of 3,3',5'-triiodothyronamine and 3',5'- diiodothyronamine. This Gallus gallus (Chicken) protein is Type II iodothyronine deiodinase (DIO2).